The chain runs to 132 residues: Aspartate 1-decarboxylase (132 aa).

Residue Ser-25 is the Schiff-base intermediate with substrate; via pyruvic acid of the active site. Ser-25 is subject to Pyruvic acid (Ser). A substrate-binding site is contributed by Thr-57. Residue Tyr-58 is the Proton donor of the active site. 73 to 75 (GAA) is a binding site for substrate.

It belongs to the PanD family. Heterooctamer of four alpha and four beta subunits. It depends on pyruvate as a cofactor. In terms of processing, is synthesized initially as an inactive proenzyme, which is activated by self-cleavage at a specific serine bond to produce a beta-subunit with a hydroxyl group at its C-terminus and an alpha-subunit with a pyruvoyl group at its N-terminus.

The protein localises to the cytoplasm. It catalyses the reaction L-aspartate + H(+) = beta-alanine + CO2. The protein operates within cofactor biosynthesis; (R)-pantothenate biosynthesis; beta-alanine from L-aspartate: step 1/1. Catalyzes the pyruvoyl-dependent decarboxylation of aspartate to produce beta-alanine. The chain is Aspartate 1-decarboxylase from Heliobacterium modesticaldum (strain ATCC 51547 / Ice1).